A 161-amino-acid polypeptide reads, in one-letter code: Cyclic pyranopterin monophosphate synthase (161 aa).

Residues 75–77 (LCH) and 113–114 (ME) each bind substrate. Asp128 is an active-site residue.

It belongs to the MoaC family. In terms of assembly, homohexamer; trimer of dimers.

It carries out the reaction (8S)-3',8-cyclo-7,8-dihydroguanosine 5'-triphosphate = cyclic pyranopterin phosphate + diphosphate. It participates in cofactor biosynthesis; molybdopterin biosynthesis. Functionally, catalyzes the conversion of (8S)-3',8-cyclo-7,8-dihydroguanosine 5'-triphosphate to cyclic pyranopterin monophosphate (cPMP). The protein is Cyclic pyranopterin monophosphate synthase of Salmonella arizonae (strain ATCC BAA-731 / CDC346-86 / RSK2980).